The sequence spans 249 residues: Aspartate/glutamate leucyltransferase (249 aa).

The protein belongs to the R-transferase family. Bpt subfamily.

Its subcellular location is the cytoplasm. It carries out the reaction N-terminal L-glutamyl-[protein] + L-leucyl-tRNA(Leu) = N-terminal L-leucyl-L-glutamyl-[protein] + tRNA(Leu) + H(+). It catalyses the reaction N-terminal L-aspartyl-[protein] + L-leucyl-tRNA(Leu) = N-terminal L-leucyl-L-aspartyl-[protein] + tRNA(Leu) + H(+). In terms of biological role, functions in the N-end rule pathway of protein degradation where it conjugates Leu from its aminoacyl-tRNA to the N-termini of proteins containing an N-terminal aspartate or glutamate. This Brucella abortus (strain S19) protein is Aspartate/glutamate leucyltransferase.